The sequence spans 79 residues: Delta-hormotoxin-Cpt1a (79 aa).

Residues 1–20 (MKTQVLAVFVLCVLFCLAES) form the signal peptide. Positions 21 to 31 (RTTLNKRIDIA) are excised as a propeptide. Cystine bridges form between C36–C75, C38–C66, and C56–C76.

It belongs to the sea anemone sodium channel inhibitory toxin family.

It is found in the secreted. It localises to the nematocyst. In neuromuscular preparation of crustaceans, the toxin increased neurotransmitter release, causing repetitive firing of the axons. May affect sodium channels (Nav). The polypeptide is Delta-hormotoxin-Cpt1a (Calliactis parasitica (Sea anemone)).